We begin with the raw amino-acid sequence, 34 residues long: Photosystem II reaction center protein M (34 aa).

The helical transmembrane segment at 7–27 (GFVASLMFILVPAIFLIVLYI) threads the bilayer.

The protein belongs to the PsbM family. As to quaternary structure, PSII is composed of 1 copy each of membrane proteins PsbA, PsbB, PsbC, PsbD, PsbE, PsbF, PsbH, PsbI, PsbJ, PsbK, PsbL, PsbM, PsbT, PsbX, PsbY, PsbZ, Psb30/Ycf12, peripheral proteins PsbO, CyanoQ (PsbQ), PsbU, PsbV and a large number of cofactors. It forms dimeric complexes.

Its subcellular location is the cellular thylakoid membrane. Functionally, one of the components of the core complex of photosystem II (PSII). PSII is a light-driven water:plastoquinone oxidoreductase that uses light energy to abstract electrons from H(2)O, generating O(2) and a proton gradient subsequently used for ATP formation. It consists of a core antenna complex that captures photons, and an electron transfer chain that converts photonic excitation into a charge separation. This subunit is found at the monomer-monomer interface. In Synechococcus sp. (strain CC9605), this protein is Photosystem II reaction center protein M.